The following is a 718-amino-acid chain: Cyclomaltodextrin glucanotransferase (718 aa).

The N-terminal stretch at 1 to 34 is a signal peptide; sequence MFQMAKRVLLSTTLTFSLLAGSALPFLPASAIYA. Positions 35–172 are A1; the sequence is DADTAVTNKQ…GIKIIIDFAP (138 aa). Positions 61, 63, 66, and 67 each coordinate Ca(2+). A disulfide bridge links Cys77 with Cys84. Residues Gly85 and Asp87 each coordinate Ca(2+). Position 134–135 (134–135) interacts with substrate; that stretch reads YW. A Ca(2+)-binding site is contributed by Asn173. A b region spans residues 173 to 236; sequence NHTSPAMETD…NLYDLADLNH (64 aa). Position 174 (His174) interacts with substrate. Ile224 provides a ligand contact to Ca(2+). 227 to 230 provides a ligand contact to substrate; the sequence is NLYD. Asp233 is a Ca(2+) binding site. The interval 237 to 440 is A2; it reads NNSTIDTYFK…LRKSNPAIAY (204 aa). Arg261 provides a ligand contact to substrate. The active-site Nucleophile is Asp263. Position 266–267 (266–267) interacts with substrate; that stretch reads KH. A Ca(2+)-binding site is contributed by His267. The active-site Proton donor is the Glu291. Positions 361, 405, and 409 each coordinate substrate. The interval 441–528 is c; sequence GSTQQRWINN…ATAVWQYTAS (88 aa). A d region spans residues 529 to 614; sequence ETTPTIGHVG…SNAYNDFTIL (86 aa). The IPT/TIG domain maps to 532-612; it reads PTIGHVGPVM…VNSNAYNDFT (81 aa). Residues 613–718 enclose the CBM20 domain; it reads ILSGDQVSVR…GTATVTINWQ (106 aa). The interval 615-718 is e; that stretch reads SGDQVSVRFV…GTATVTINWQ (104 aa).

This sequence belongs to the glycosyl hydrolase 13 family. Monomer. The cofactor is Ca(2+).

Its subcellular location is the secreted. It carries out the reaction Cyclizes part of a (1-&gt;4)-alpha-D-glucan chain by formation of a (1-&gt;4)-alpha-D-glucosidic bond.. The chain is Cyclomaltodextrin glucanotransferase (cgtA) from Bacillus licheniformis.